Here is a 407-residue protein sequence, read N- to C-terminus: Tyrosine--tRNA ligase (407 aa).

Y36 serves as a coordination point for L-tyrosine. The short motif at 41–50 (PTADSLHIGH) is the 'HIGH' region element. 2 residues coordinate L-tyrosine: Y169 and Q173. The short motif at 229 to 233 (KMGKT) is the 'KMSKS' region element. Residue K232 participates in ATP binding. An S4 RNA-binding domain is found at 341–407 (KGILDILVET…KKSYNRIVIE (67 aa)).

It belongs to the class-I aminoacyl-tRNA synthetase family. TyrS type 1 subfamily. As to quaternary structure, homodimer.

It is found in the cytoplasm. The enzyme catalyses tRNA(Tyr) + L-tyrosine + ATP = L-tyrosyl-tRNA(Tyr) + AMP + diphosphate + H(+). Functionally, catalyzes the attachment of tyrosine to tRNA(Tyr) in a two-step reaction: tyrosine is first activated by ATP to form Tyr-AMP and then transferred to the acceptor end of tRNA(Tyr). The protein is Tyrosine--tRNA ligase of Clostridium tetani (strain Massachusetts / E88).